A 274-amino-acid polypeptide reads, in one-letter code: NH(3)-dependent NAD(+) synthetase (274 aa).

Gly46–Ser53 is an ATP binding site. Asp52 contributes to the Mg(2+) binding site. Residue Arg140 participates in deamido-NAD(+) binding. Residue Thr160 coordinates ATP. Mg(2+) is bound at residue Glu165. Residues Lys173 and Asp180 each contribute to the deamido-NAD(+) site. Residues Lys189 and Thr211 each contribute to the ATP site. His260 to Lys261 contacts deamido-NAD(+).

Belongs to the NAD synthetase family. In terms of assembly, homodimer.

The catalysed reaction is deamido-NAD(+) + NH4(+) + ATP = AMP + diphosphate + NAD(+) + H(+). It functions in the pathway cofactor biosynthesis; NAD(+) biosynthesis; NAD(+) from deamido-NAD(+) (ammonia route): step 1/1. Catalyzes the ATP-dependent amidation of deamido-NAD to form NAD. Uses ammonia as a nitrogen source. The chain is NH(3)-dependent NAD(+) synthetase from Streptococcus equi subsp. zooepidemicus (strain MGCS10565).